Here is a 463-residue protein sequence, read N- to C-terminus: Quinolone resistance protein NorB (463 aa).

Helical transmembrane passes span 17 to 37, 53 to 73, 86 to 106, 107 to 127, 142 to 162, 165 to 185, 201 to 221, 230 to 250, 273 to 293, 299 to 319, 334 to 354, 357 to 377, 403 to 423, and 435 to 455; these read IGIV…VNVV, IAVS…GGLA, IILN…LLLI, IGRL…LSII, YWSI…GAVA, LGWR…LFLI, FDIK…ILIT, SLLF…FIVL, TASN…NTFV, YSSL…LIMI, PMLI…LTFL, ILYV…LGIY, MASA…YAIV, and IALW…LLLV.

It belongs to the major facilitator superfamily. TCR/Tet family.

It is found in the cell membrane. Functionally, multidrug efflux pump that acts independently of NorA and is one of the factors that confers resistance against diverse quinolones and chemical compounds. In Staphylococcus aureus (strain MRSA252), this protein is Quinolone resistance protein NorB (norB).